A 597-amino-acid chain; its full sequence is (E)-sabinene hydrate synthase, chloroplastic (597 aa).

The transit peptide at 1 to 47 (MSTISINHVGILRNPLQCKNKRTSINKPWSLSLPRSSPASRLVKPCR) directs the protein to the chloroplast. Mn(2+)-binding residues include Asp353 and Asp357. The DDXXD motif signature appears at 353-357 (DDVYD). 2 homodimerization regions span residues 359–365 (YGTLDEL) and 431–468 (EAGWYENGYTPSLEEYLTNATISIGVPPIVLPVEVSLP). Asp495 and Glu503 together coordinate Mn(2+).

Belongs to the terpene synthase family. In terms of assembly, homodimer. It depends on Mn(2+) as a cofactor. Requires Mg(2+) as cofactor.

Its subcellular location is the plastid. It localises to the chloroplast. It catalyses the reaction (2E)-geranyl diphosphate + H2O = sabinene hydrate + diphosphate. Its pathway is secondary metabolite biosynthesis; terpenoid biosynthesis. Functionally, involved in the biosynthesis of phenolic monoterpenes natural products. Monoterpene synthase which catalyzes the conversion of geranyl diphosphate (GPP) to sabinene hydrate, specifically (E)-sabinene hydrate, and the formation of minor amounts and traces of several other monoterpenes (e.g. mainly alpha-pinene, limonene and alpha-terpineol). The sequence is that of (E)-sabinene hydrate synthase, chloroplastic from Thymus vulgaris (Thyme).